Here is a 663-residue protein sequence, read N- to C-terminus: LMAGHPNYGDILMQSGGAAGTAHLHEYLSPVDVSRFSSPRVTPRLSRKRALSISPLSDASIDLQTMIRTSPNSLVAYINNSRSSSAASGSYGHLSAGTISPAFSFPHPINPVTYQQILTQQRGLSSAFGHTPPLIQPSPTFPPRQHMAVISVNPPPAQISSNSNCISDSSQSKQSSESAVSSTVNPVINKRTKVKTEVEGLPQYPQPRQEHLTDLKEDLDKDECKQEPEVIYETNCHWEGCTKEYDTQEQLVHHINNDHIHGEKKEFVCRWQDCTREQKPFKAQYMLVVHMRRHTGEKPHKCTFEGCSKAYSRLENLKTHLRSHTGEKPYVCEHEGCNKAFSNASDRAKHQNRTHSNEKPYVCKIPGCTKRYTDPSSLRKHVKTVHGPDAHVTKKQRNDVHPRPPPLKENGDNEASAKQSSKVSEESPEANSTTRSMEDCLQVKTIKTENSVMCQSSPGGQSSCSSEPSPLGSTNNNDSGVEMNMHGGGSLGDLTGWMTRLPVVDSTVSSGNLTVSLQLRKHMTTMQRLEQLKKEKLKTVKDSCSWVNPAPQGRNTKLPPISGNGSILENSGGSSRTLPNPRIMELSVNEVTMLNQINERRDSTTSTISSAYTVSRRSSGISPYFSSRRSSEASQLGHRPNNTSSADSYDPISTGGREFDIKL.

Residues 159 to 186 (ISSNSNCISDSSQSKQSSESAVSSTVNP) are disordered. Residues 160–182 (SSNSNCISDSSQSKQSSESAVSS) are compositionally biased toward low complexity. C2H2-type zinc fingers lie at residues 234-259 (TNCHWEGCTKEYDTQEQLVHHINNDH), 267-294 (FVCRWQDCTREQKPFKAQYMLVVHMRRH), 300-324 (HKCTFEGCSKAYSRLENLKTHLRSH), 330-355 (YVCEHEGCNKAFSNASDRAKHQNRTH), and 361-386 (YVCKIPGCTKRYTDPSSLRKHVKTVH). 4 disordered regions span residues 374 to 440 (DPSS…MEDC), 452 to 481 (VMCQSSPGGQSSCSSEPSPLGSTNNNDSGV), 544 to 578 (CSWVNPAPQGRNTKLPPISGNGSILENSGGSSRTL), and 619 to 663 (SGIS…DIKL). Residues 386-402 (HGPDAHVTKKQRNDVHP) are compositionally biased toward basic and acidic residues. Over residues 456–473 (SSPGGQSSCSSEPSPLGS) the composition is skewed to low complexity. 2 stretches are compositionally biased toward polar residues: residues 563–578 (GNGSILENSGGSSRTL) and 619–647 (SGISPYFSSRRSSEASQLGHRPNNTSSAD).

It belongs to the GLI C2H2-type zinc-finger protein family.

It is found in the nucleus. The protein resides in the cytoplasm. Its subcellular location is the cell projection. It localises to the cilium. Functions as a transcription regulator in the hedgehog (Hh) pathway. Functions as a transcriptional activator. May also function as transcriptional repressor. Binds to the DNA sequence 5'-GAACCACCCA-3'. Is involved in the smoothened (SHH) signaling pathway. Required for normal skeleton development. The protein is Zinc finger protein GLI2 of Gallus gallus (Chicken).